The primary structure comprises 546 residues: Chaperonin GroEL 2 (546 aa).

Residues 30–33, Lys-51, 87–91, Gly-415, 479–481, and Asp-495 contribute to the ATP site; these read TLGP, DGTTT, and NAA. The interval 524-546 is disordered; that stretch reads APKDAPPAQPAGVPGAGGTGFDF. The span at 537–546 shows a compositional bias: gly residues; that stretch reads PGAGGTGFDF.

The protein belongs to the chaperonin (HSP60) family. In terms of assembly, forms a cylinder of 14 subunits composed of two heptameric rings stacked back-to-back. Interacts with the co-chaperonin GroES.

It localises to the cytoplasm. The catalysed reaction is ATP + H2O + a folded polypeptide = ADP + phosphate + an unfolded polypeptide.. In terms of biological role, together with its co-chaperonin GroES, plays an essential role in assisting protein folding. The GroEL-GroES system forms a nano-cage that allows encapsulation of the non-native substrate proteins and provides a physical environment optimized to promote and accelerate protein folding. The sequence is that of Chaperonin GroEL 2 from Burkholderia thailandensis (strain ATCC 700388 / DSM 13276 / CCUG 48851 / CIP 106301 / E264).